Here is a 332-residue protein sequence, read N- to C-terminus: MTVTANQVLRPRGPQIERLTDTRAKVVIEPLERGYGHTLGNALRRVLLSSIPGFAITEVEIDGVLHEYTTVEGLQEDVLEVLLNLKDVAIRMHSGDSATLSLSKQGPGVVTAADIKVDHNVEILNGDHVICHLTKDTAINMRLKIERGFGYQPAAARRRPDEETRAIGRLVLDASFSPVRRVAYAVEAARVEQRTDLDKLVIDIETNGTIDAEEAVRTAADILSDQLSVFGDFTHRDRGAAKPANNGVDPVLLRPIDDLELTVRSANCLKAESIYYIGDLIQKTEVELLKTPNLGKKSLTEIKEVLAQRGLSLGMKLENWPPAGVASHGMLG.

The interval 1 to 234 (MTVTANQVLR…DQLSVFGDFT (234 aa)) is alpha N-terminal domain (alpha-NTD). An alpha C-terminal domain (alpha-CTD) region spans residues 248–332 (VDPVLLRPID…AGVASHGMLG (85 aa)).

This sequence belongs to the RNA polymerase alpha chain family. As to quaternary structure, homodimer. The RNAP catalytic core consists of 2 alpha, 1 beta, 1 beta' and 1 omega subunit. When a sigma factor is associated with the core the holoenzyme is formed, which can initiate transcription.

The catalysed reaction is RNA(n) + a ribonucleoside 5'-triphosphate = RNA(n+1) + diphosphate. Functionally, DNA-dependent RNA polymerase catalyzes the transcription of DNA into RNA using the four ribonucleoside triphosphates as substrates. This Stenotrophomonas maltophilia (strain K279a) protein is DNA-directed RNA polymerase subunit alpha.